Consider the following 702-residue polypeptide: Elongation factor G 2 (702 aa).

One can recognise a tr-type G domain in the interval 8–285; that stretch reads DMVRNIGISA…AVTYYLPSPA (278 aa). GTP-binding positions include 17-24, 84-88, and 138-141; these read AHIDSGKT, DTPGH, and NKLD.

This sequence belongs to the TRAFAC class translation factor GTPase superfamily. Classic translation factor GTPase family. EF-G/EF-2 subfamily.

It is found in the cytoplasm. Catalyzes the GTP-dependent ribosomal translocation step during translation elongation. During this step, the ribosome changes from the pre-translocational (PRE) to the post-translocational (POST) state as the newly formed A-site-bound peptidyl-tRNA and P-site-bound deacylated tRNA move to the P and E sites, respectively. Catalyzes the coordinated movement of the two tRNA molecules, the mRNA and conformational changes in the ribosome. The polypeptide is Elongation factor G 2 (Bdellovibrio bacteriovorus (strain ATCC 15356 / DSM 50701 / NCIMB 9529 / HD100)).